A 447-amino-acid chain; its full sequence is Glutamyl-tRNA(Gln) amidotransferase subunit A (447 aa).

Active-site charge relay system residues include Lys-51 and Ser-126. Ser-150 (acyl-ester intermediate) is an active-site residue.

The protein belongs to the amidase family. GatA subfamily. As to quaternary structure, heterotrimer of A, B and C subunits.

The catalysed reaction is L-glutamyl-tRNA(Gln) + L-glutamine + ATP + H2O = L-glutaminyl-tRNA(Gln) + L-glutamate + ADP + phosphate + H(+). In terms of biological role, allows the formation of correctly charged Gln-tRNA(Gln) through the transamidation of misacylated Glu-tRNA(Gln) in organisms which lack glutaminyl-tRNA synthetase. The reaction takes place in the presence of glutamine and ATP through an activated gamma-phospho-Glu-tRNA(Gln). The protein is Glutamyl-tRNA(Gln) amidotransferase subunit A of Helicobacter hepaticus (strain ATCC 51449 / 3B1).